Consider the following 926-residue polypeptide: Tyrosine-protein phosphatase non-receptor type 4 (926 aa).

The 284-residue stretch at 29 to 312 folds into the FERM domain; sequence VVCNILLLDN…EHHTFFRLDR (284 aa). Disordered regions lie at residues 379–412, 429–474, and 492–511; these read SDDRLETQSLPSRSPPGTPNHRNSSFTQEATRVR, SEDF…KKNS, and NESFDVPSSPEKSTPNGGIP. Polar residues-rich tracts occupy residues 398–408 and 432–455; these read NHRNSSFTQEA and FVSQRSPSSTQANSIVLESSPSQE. At S474 the chain carries Phosphoserine. The 73-residue stretch at 517–589 folds into the PDZ domain; sequence LIKMKPDENG…DQVVLFIKAS (73 aa). Residues 655–911 enclose the Tyrosine-protein phosphatase domain; the sequence is VLAQFDQLYR…RFVCEAILKV (257 aa). Substrate is bound by residues D820, 852 to 858, and Q896; that span reads CSAGIGR. Catalysis depends on C852, which acts as the Phosphocysteine intermediate.

Belongs to the protein-tyrosine phosphatase family. Non-receptor class subfamily. In terms of tissue distribution, highly expressed in testis. Specifically expressed in spermatocytes and spermatids within seminiferous tubules (at protein level).

It is found in the cell membrane. The protein localises to the cytoplasm. Its subcellular location is the cytoskeleton. It carries out the reaction O-phospho-L-tyrosyl-[protein] + H2O = L-tyrosyl-[protein] + phosphate. Phosphatase that plays a role in immunity, learning, synaptic plasticity or cell homeostasis. Regulates neuronal cell homeostasis by protecting neurons against apoptosis. Negatively regulates TLR4-induced interferon beta production by dephosphorylating adapter TICAM2 and inhibiting subsequent TRAM-TRIF interaction. Dephosphorylates also the immunoreceptor tyrosine-based activation motifs/ITAMs of the TCR zeta subunit and thereby negatively regulates TCR-mediated signaling pathway. May act at junctions between the membrane and the cytoskeleton. The sequence is that of Tyrosine-protein phosphatase non-receptor type 4 (Ptpn4) from Mus musculus (Mouse).